Consider the following 341-residue polypeptide: Myb-related transcription factor, partner of profilin (341 aa).

Positions 8–80 constitute a Myb-like domain; the sequence is VTRLRKPRFS…EVQKRWNDFK (73 aa). 3 disordered regions span residues 84–103, 180–210, and 309–341; these read KEKLARVPHSTQSGTAEEAM, LPHLTPSPDPSECPSPPPPGSGTPLLTPSGV, and AEPPRSPSPPPPNKRKRFGYLSQRKRRGRWKNL. Over residues 184–200 the composition is skewed to pro residues; it reads TPSPDPSECPSPPPPGS. Residues 321-341 show a composition bias toward basic residues; the sequence is NKRKRFGYLSQRKRRGRWKNL.

The protein resides in the nucleus. In terms of biological role, transcriptional repressor; DNA-binding protein that specifically recognizes the core sequence 5'-YAAC[GT]G-3'. The chain is Myb-related transcription factor, partner of profilin (mypop) from Xenopus laevis (African clawed frog).